Consider the following 212-residue polypeptide: NAD(P)H-hydrate epimerase (212 aa).

The region spanning methionine 11–aspartate 212 is the YjeF N-terminal domain. Asparagine 60–aspartate 64 contacts (6S)-NADPHX. 2 residues coordinate K(+): asparagine 61 and aspartate 123. Residues glycine 127–alanine 133, tyrosine 138, and aspartate 156 each bind (6S)-NADPHX. Serine 159 lines the K(+) pocket.

It belongs to the NnrE/AIBP family. The cofactor is K(+).

It carries out the reaction (6R)-NADHX = (6S)-NADHX. It catalyses the reaction (6R)-NADPHX = (6S)-NADPHX. In terms of biological role, catalyzes the epimerization of the S- and R-forms of NAD(P)HX, a damaged form of NAD(P)H that is a result of enzymatic or heat-dependent hydration. This is a prerequisite for the S-specific NAD(P)H-hydrate dehydratase to allow the repair of both epimers of NAD(P)HX. The protein is NAD(P)H-hydrate epimerase of Limosilactobacillus reuteri (strain DSM 20016) (Lactobacillus reuteri).